A 515-amino-acid polypeptide reads, in one-letter code: Gamma aminobutyrate transaminase 1, mitochondrial (515 aa).

The transit peptide at 1–57 (MAKISRLFGSTVKAAITAQAGFHGKRIPAVSSLQEHIVKSTPARYNSTQACLENDIS) directs the protein to the mitochondrion. 172–173 (GS) contacts pyridoxal 5'-phosphate. Residue tyrosine 205 coordinates substrate. Aspartate 312 lines the pyridoxal 5'-phosphate pocket. Lysine 341 is a substrate binding site. Residue lysine 341 is modified to N6-(pyridoxal phosphate)lysine.

Belongs to the class-III pyridoxal-phosphate-dependent aminotransferase family. As to expression, expressed in leaves, roots, stems, flowers and fruits.

The protein localises to the mitochondrion. It carries out the reaction 4-aminobutanoate + pyruvate = succinate semialdehyde + L-alanine. The enzyme catalyses 4-aminobutanoate + glyoxylate = succinate semialdehyde + glycine. Its function is as follows. Transaminase that degrades gamma-amino butyric acid (GABA) and uses pyruvate or glyoxylate as amino-group acceptor. Cannot use beta-alanine, ornithine, acetylornithine, serine, glycine, asparagine, glutamine, glutamate, valine, leucine, isoleucine, methionine, phenylalanine, histidine, lysine, arginine, aspartate, threonine, tyrosine, tryptophan, proline, or cysteine as amino donors. Acts predominantly in vegetative tissues. This chain is Gamma aminobutyrate transaminase 1, mitochondrial (GABA-TP1), found in Solanum lycopersicum (Tomato).